A 125-amino-acid chain; its full sequence is Natriuretic peptide GNP1 (125 aa).

Residues 1–25 (MDPRLVRAGSLVLLLALLVQDQGAA) form the signal peptide. 2 disordered regions span residues 23 to 78 (GAAH…PAFK) and 105 to 125 (VSGMGCNKFDPNKGSSSTGKK). Residues 26 to 85 (HPARAGQKYKPLIRRSEEDSQALGQEGDVAARAADEEEDAAGPGDALRQPAFKTLLASRE) constitute a propeptide that is removed on maturation. Cysteine 94 and cysteine 110 are disulfide-bonded.

It belongs to the natriuretic peptide family. In terms of tissue distribution, expressed by the venom gland.

Its subcellular location is the secreted. Its function is as follows. Exhibits natriuretic and vasodepressor activity. Acts by stimulating cGMP. The sequence is that of Natriuretic peptide GNP1 from Varanus varius (Lace monitor lizard).